Reading from the N-terminus, the 507-residue chain is Cytochrome P450 4X1 (507 aa).

The chain crosses the membrane as a helical span at residues 14-34; sequence LHLALVFCLALVLMQAMKLYL. C452 contributes to the heme binding site.

This sequence belongs to the cytochrome P450 family. The cofactor is heme. As to expression, expressed in brain and aorta. In the brain, expressed in the Purkinje cells of the cerebellum, pyramidal neurons in the dentate gyrus of the hippocampus, cortical forebrain neurons and those of brain stem nuclei (at protein level). In addition to neurons, also expressed in cerebral vascular endothelial cells (at protein level). Also expressed in epithelial cells of the choroid plexus (at protein level). Hardly detectable in heart, lung, kidney and spleen.

The protein resides in the endoplasmic reticulum membrane. It localises to the microsome membrane. It carries out the reaction N-(5Z,8Z,11Z,14Z-eicosatetraenoyl)-ethanolamine + reduced [NADPH--hemoprotein reductase] + O2 = N-(14,15-epoxy-5Z,8Z,11Z-eicosatrienoyl)-ethanolamine + oxidized [NADPH--hemoprotein reductase] + H2O + H(+). Its function is as follows. A cytochrome P450 monooxygenase that selectively catalyzes the epoxidation of the last double bond of the arachidonoyl moiety of anandamide, potentially modulating endocannabinoid signaling. Has no hydroxylase activity toward various fatty acids, steroids and prostaglandins. Mechanistically, uses molecular oxygen inserting one oxygen atom into a substrate, and reducing the second into a water molecule, with two electrons provided by NADPH via cytochrome P450 reductase (CPR; NADPH-ferrihemoprotein reductase). This chain is Cytochrome P450 4X1, found in Mus musculus (Mouse).